Reading from the N-terminus, the 308-residue chain is Ornithine carbamoyltransferase (308 aa).

Carbamoyl phosphate is bound by residues 56-59 (STRT), Gln83, Arg107, and 134-137 (HPCQ). Residues Asn165, Asp225, and 229–230 (SM) each bind L-ornithine. Residues 266–267 (CL) and Arg294 each bind carbamoyl phosphate.

This sequence belongs to the aspartate/ornithine carbamoyltransferase superfamily. OTCase family.

The protein resides in the cytoplasm. It catalyses the reaction carbamoyl phosphate + L-ornithine = L-citrulline + phosphate + H(+). It functions in the pathway amino-acid biosynthesis; L-arginine biosynthesis; L-arginine from L-ornithine and carbamoyl phosphate: step 1/3. Its function is as follows. Reversibly catalyzes the transfer of the carbamoyl group from carbamoyl phosphate (CP) to the N(epsilon) atom of ornithine (ORN) to produce L-citrulline. The sequence is that of Ornithine carbamoyltransferase from Paracoccus denitrificans (strain Pd 1222).